Consider the following 1007-residue polypeptide: Serine/threonine-protein kinase PRP4 homolog (1007 aa).

Over residues 1–10 the composition is skewed to polar residues; the sequence is MAAAETQSLR. Residues 1–99 form a disordered region; that stretch reads MAAAETQSLR…EGMSPAKRTK (99 aa). A2 carries the post-translational modification N-acetylalanine. S8, S20, S23, and S32 each carry phosphoserine. 2 stretches are compositionally biased toward basic residues: residues 39 to 59 and 67 to 81; these read KHSRHKKKKHKHRSKHKKHKH and KKHKHKHKHKKHKRK. Residues 82 to 91 show a composition bias toward basic and acidic residues; that stretch reads EIIDASDKEG. Residues S87 and S93 each carry the phosphoserine modification. K99 is modified (N6-acetyllysine; alternate). Residue K99 forms a Glycyl lysine isopeptide (Lys-Gly) (interchain with G-Cter in SUMO2); alternate linkage. K111 participates in a covalent cross-link: Glycyl lysine isopeptide (Lys-Gly) (interchain with G-Cter in SUMO2). A Glycyl lysine isopeptide (Lys-Gly) (interchain with G-Cter in SUMO2); alternate cross-link involves residue K117. Residue K117 forms a Glycyl lysine isopeptide (Lys-Gly) (interchain with G-Cter in SUMO1); alternate linkage. Phosphoserine is present on S131. Y140 carries the phosphotyrosine modification. Disordered stretches follow at residues 140–533 and 559–583; these read YESG…EEED and SNMSVPSEPSSPQSSTRTRSPSPDD. S142, S144, and S166 each carry phosphoserine. Positions 157-168 are enriched in low complexity; the sequence is GNRSSTRSSSTK. Glycyl lysine isopeptide (Lys-Gly) (interchain with G-Cter in SUMO2) cross-links involve residues K170 and K177. Composition is skewed to basic residues over residues 179-202 and 214-230; these read TTKKRSKSRSKERTRHRSDKKKSK and RSKSKERKKSKSPSKRS. Residues S239, S241, S257, S277, S283, S292, and S294 each carry the phosphoserine modification. Residues 247-270 show a composition bias toward basic and acidic residues; sequence RSQEKIGKARSPTDDKVKIEDKSK. The segment covering 302–315 has biased composition (basic residues); the sequence is SKDRRSRSKERKSK. Residues 316-325 are compositionally biased toward basic and acidic residues; the sequence is RSETDKEKKP. Phosphoserine occurs at positions 328, 354, 356, 366, and 368. Positions 342 to 367 are enriched in basic residues; sequence PSRRPGRSPKRRSLSPKPRDKSRRSR. At T385 the chain carries Phosphothreonine. S387 bears the Phosphoserine mark. Basic and acidic residues-rich tracts occupy residues 395–408 and 415–429; these read RSLERKRREPERRR and RPRDDILSRRERSKD. S427, S431, and S437 each carry phosphoserine. The span at 438-497 shows a compositional bias: basic residues; that stretch reads PTRRRSRSPIRRRSRSPLRRSRSPRRRSRSPRRRDRGRRSRSRLRRRSRSRGGRRRRSRS. Phosphoserine occurs at positions 518, 519, 520, 565, 569, 578, and 580. Residues 518 to 533 show a composition bias toward acidic residues; it reads SSSDDNLEDFDVEEED. Low complexity predominate over residues 562 to 581; it reads SVPSEPSSPQSSTRTRSPSP. Residues K593 and K659 each participate in a glycyl lysine isopeptide (Lys-Gly) (interchain with G-Cter in SUMO2) cross-link. Residues 687–1006 enclose the Protein kinase domain; that stretch reads YNVYGYTGQG…ALQHAFIQEK (320 aa). ATP-binding positions include 693-701 and K717; that span reads TGQGVFSNV. K717 carries the post-translational modification N6-acetyllysine. D815 (proton acceptor) is an active-site residue. Phosphotyrosine is present on Y849. A Phosphoserine modification is found at S852.

It belongs to the protein kinase superfamily. CMGC Ser/Thr protein kinase family. In terms of assembly, interacts with CLK1 C-terminus. Associates with the U5 snRNP and NCOR1 deacetylase complexes. Identified in the spliceosome C complex. Phosphorylated by CLK1. Autophosphorylated; phosphorylation inhibits interaction with its targets, such as PRPF6 or SMARCA4. As to expression, ubiquitous.

It localises to the nucleus. The protein resides in the chromosome. It is found in the centromere. The protein localises to the kinetochore. It catalyses the reaction L-seryl-[protein] + ATP = O-phospho-L-seryl-[protein] + ADP + H(+). The enzyme catalyses L-threonyl-[protein] + ATP = O-phospho-L-threonyl-[protein] + ADP + H(+). In terms of biological role, serine/threonine kinase involved in spliceosomal assembly as well as mitosis and signaling regulation. Connects chromatin mediated regulation of transcription and pre-mRNA splicing. During spliceosomal assembly, interacts with and phosphorylates PRPF6 and PRPF31, components of the U4/U6-U5 tri-small nuclear ribonucleoprotein (snRNP), to facilitate the formation of the spliceosome B complex. Plays a role in regulating transcription and the spindle assembly checkpoint (SAC). Associates with U5 snRNP and NCOR1 deacetylase complexes which may allow a coordination of pre-mRNA splicing with chromatin remodeling events involved in transcriptional regulation. Associates and probably phosphorylates SMARCA4 and NCOR1. Phosphorylates SRSF1. Associates with kinetochores during mitosis and is necessary for recruitment and maintenance of the checkpoint proteins such as MAD1L1 and MAD12L1 at the kinetochores. Phosphorylates and regulates the activity of the transcription factors such as ELK1 and KLF13. Phosphorylates nuclear YAP1 and WWTR1/TAZ which induces nuclear exclusion and regulates Hippo signaling pathway, involved in tissue growth control. This Homo sapiens (Human) protein is Serine/threonine-protein kinase PRP4 homolog.